A 235-amino-acid polypeptide reads, in one-letter code: Probable pyridoxal 5'-phosphate synthase subunit PDX1 (235 aa).

Residue lysine 16 is the Schiff-base intermediate with D-ribose 5-phosphate of the active site. Arginine 104 serves as a coordination point for D-glyceraldehyde 3-phosphate. D-ribose 5-phosphate is bound by residues glycine 153 and 174–175 (GS).

This sequence belongs to the PdxS/SNZ family.

The enzyme catalyses aldehydo-D-ribose 5-phosphate + D-glyceraldehyde 3-phosphate + L-glutamine = pyridoxal 5'-phosphate + L-glutamate + phosphate + 3 H2O + H(+). It functions in the pathway cofactor biosynthesis; pyridoxal 5'-phosphate biosynthesis. Its function is as follows. Catalyzes the formation of pyridoxal 5'-phosphate from ribose 5-phosphate (RBP), glyceraldehyde 3-phosphate (G3P) and ammonia. The ammonia is provided by PDX2. Can also use ribulose 5-phosphate and dihydroxyacetone phosphate as substrates, resulting from enzyme-catalyzed isomerization of RBP and G3P, respectively. Also plays an indirect role in resistance to singlet oxygen-generating photosensitizers. The sequence is that of Probable pyridoxal 5'-phosphate synthase subunit PDX1 from Stellaria longipes (Longstalk starwort).